The primary structure comprises 61 residues: Photosystem II reaction center protein K (61 aa).

A propeptide spanning residues 1–24 (MLNIFNLICICFNSALFSSSFLFA) is cleaved from the precursor. A helical membrane pass occupies residues 36–56 (IVDFMPVIPVLFFLLAFVWQA).

This sequence belongs to the PsbK family. In terms of assembly, PSII is composed of 1 copy each of membrane proteins PsbA, PsbB, PsbC, PsbD, PsbE, PsbF, PsbH, PsbI, PsbJ, PsbK, PsbL, PsbM, PsbT, PsbX, PsbY, PsbZ, Psb30/Ycf12, at least 3 peripheral proteins of the oxygen-evolving complex and a large number of cofactors. It forms dimeric complexes.

The protein localises to the plastid. The protein resides in the chloroplast thylakoid membrane. Functionally, one of the components of the core complex of photosystem II (PSII). PSII is a light-driven water:plastoquinone oxidoreductase that uses light energy to abstract electrons from H(2)O, generating O(2) and a proton gradient subsequently used for ATP formation. It consists of a core antenna complex that captures photons, and an electron transfer chain that converts photonic excitation into a charge separation. This is Photosystem II reaction center protein K from Gossypium barbadense (Sea Island cotton).